Reading from the N-terminus, the 216-residue chain is Large ribosomal subunit protein bL25 (216 aa).

Residues 184–216 are disordered; sequence VPPTSDVEEEEGDEDLEEDVEETAAEEEEGVEE. The segment covering 189–216 has biased composition (acidic residues); the sequence is DVEEEEGDEDLEEDVEETAAEEEEGVEE.

Belongs to the bacterial ribosomal protein bL25 family. CTC subfamily. Part of the 50S ribosomal subunit; part of the 5S rRNA/L5/L18/L25 subcomplex. Contacts the 5S rRNA. Binds to the 5S rRNA independently of L5 and L18.

This is one of the proteins that binds to the 5S RNA in the ribosome where it forms part of the central protuberance. This chain is Large ribosomal subunit protein bL25, found in Desulforapulum autotrophicum (strain ATCC 43914 / DSM 3382 / VKM B-1955 / HRM2) (Desulfobacterium autotrophicum).